The chain runs to 914 residues: Linoleate 13S-lipoxygenase 3-1, chloroplastic (914 aa).

A chloroplast-targeting transit peptide spans M1–R83. The region spanning L96 to S218 is the PLAT domain. The Lipoxygenase domain maps to P221–I914. 5 residues coordinate Fe cation: H574, H579, H765, N769, and I914.

It belongs to the lipoxygenase family. Monomer. It depends on Fe cation as a cofactor. In terms of tissue distribution, expressed in roots and leaves. Detected in tubers and flower buds.

The protein localises to the plastid. The protein resides in the chloroplast stroma. It is found in the chloroplast thylakoid. The catalysed reaction is (9Z,12Z)-octadecadienoate + O2 = (13S)-hydroperoxy-(9Z,11E)-octadecadienoate. It catalyses the reaction (9Z,12Z,15Z)-octadecatrienoate + O2 = (13S)-hydroperoxy-(9Z,11E,15Z)-octadecatrienoate. It functions in the pathway lipid metabolism; oxylipin biosynthesis. Its function is as follows. Plant lipoxygenases may be involved in a number of diverse aspects of plant physiology including growth and development, pest resistance, and senescence or responses to wounding. Required for the regulation of wound-induced gene expression, but is not involved in the bulk production of jasmonate upon wounding. Catalyzes the hydroperoxidation of lipids containing a cis,cis-1,4-pentadiene structure. Linolenic acid is the preferred substrate, before linoleic and arachidonic acids. The chain is Linoleate 13S-lipoxygenase 3-1, chloroplastic (LOX3.1) from Solanum tuberosum (Potato).